The sequence spans 115 residues: Large ribosomal subunit protein bL20c (115 aa).

This sequence belongs to the bacterial ribosomal protein bL20 family.

The protein localises to the plastid. It localises to the chloroplast. Its function is as follows. Binds directly to 23S ribosomal RNA and is necessary for the in vitro assembly process of the 50S ribosomal subunit. It is not involved in the protein synthesizing functions of that subunit. The protein is Large ribosomal subunit protein bL20c of Chlorokybus atmophyticus (Soil alga).